A 203-amino-acid polypeptide reads, in one-letter code: Protein GrpE (203 aa).

Belongs to the GrpE family. As to quaternary structure, homodimer.

Its subcellular location is the cytoplasm. Participates actively in the response to hyperosmotic and heat shock by preventing the aggregation of stress-denatured proteins, in association with DnaK and GrpE. It is the nucleotide exchange factor for DnaK and may function as a thermosensor. Unfolded proteins bind initially to DnaJ; upon interaction with the DnaJ-bound protein, DnaK hydrolyzes its bound ATP, resulting in the formation of a stable complex. GrpE releases ADP from DnaK; ATP binding to DnaK triggers the release of the substrate protein, thus completing the reaction cycle. Several rounds of ATP-dependent interactions between DnaJ, DnaK and GrpE are required for fully efficient folding. The chain is Protein GrpE from Pseudoalteromonas translucida (strain TAC 125).